Reading from the N-terminus, the 358-residue chain is DNA replication and repair protein RecF (358 aa).

Position 30-37 (30-37 (GANGSGKT)) interacts with ATP.

It belongs to the RecF family.

It localises to the cytoplasm. The RecF protein is involved in DNA metabolism; it is required for DNA replication and normal SOS inducibility. RecF binds preferentially to single-stranded, linear DNA. It also seems to bind ATP. This chain is DNA replication and repair protein RecF, found in Acinetobacter baylyi (strain ATCC 33305 / BD413 / ADP1).